The chain runs to 39 residues: Cytochrome b559 subunit beta (39 aa).

Residues 14 to 30 (WLAVHGLAVPTVSFLGS) traverse the membrane as a helical segment. His18 is a binding site for heme.

Belongs to the PsbE/PsbF family. Heterodimer of an alpha subunit and a beta subunit. PSII is composed of 1 copy each of membrane proteins PsbA, PsbB, PsbC, PsbD, PsbE, PsbF, PsbH, PsbI, PsbJ, PsbK, PsbL, PsbM, PsbT, PsbX, PsbY, PsbZ, Psb30/Ycf12, at least 3 peripheral proteins of the oxygen-evolving complex and a large number of cofactors. It forms dimeric complexes. The cofactor is heme b.

Its subcellular location is the plastid. It localises to the chloroplast thylakoid membrane. Functionally, this b-type cytochrome is tightly associated with the reaction center of photosystem II (PSII). PSII is a light-driven water:plastoquinone oxidoreductase that uses light energy to abstract electrons from H(2)O, generating O(2) and a proton gradient subsequently used for ATP formation. It consists of a core antenna complex that captures photons, and an electron transfer chain that converts photonic excitation into a charge separation. In Lotus japonicus (Lotus corniculatus var. japonicus), this protein is Cytochrome b559 subunit beta.